Reading from the N-terminus, the 115-residue chain is Macroconotoxin Mu8.1 (115 aa).

An N-terminal signal peptide occupies residues 1 to 21 (MDMKMTFSGLVLVVLVTTVVG). Residues 22-26 (SSVRR) constitute a propeptide that is removed on maturation. Cystine bridges form between Cys36-Cys77, Cys44-Cys60, Cys48-Cys56, Cys83-Cys115, and Cys87-Cys97. Glu40 serves as a coordination point for Zn(2+). His68 is a Zn(2+) binding site.

In terms of assembly, mostly found as a homodimer in solution; non-covalently bound. As to expression, expressed by the venom duct.

The protein localises to the secreted. Its function is as follows. Modestly and reversibly inhibits Cav2.3/CACNA1E (IC(50)=5.8 uM) recombinantly expressed in HEK293 cells without affecting the voltage dependence of activation. In mouse DRG sensory neurons, modulates depolarization-induced calcium influx. The chain is Macroconotoxin Mu8.1 from Conus mucronatus (Pointed cone).